The following is a 365-amino-acid chain: Succinyl-diaminopimelate desuccinylase (365 aa).

Zn(2+) is bound at residue His64. Asp66 is a catalytic residue. A Zn(2+)-binding site is contributed by Asp95. Glu125 functions as the Proton acceptor in the catalytic mechanism. Residues Glu126, Glu154, and His339 each coordinate Zn(2+).

This sequence belongs to the peptidase M20A family. DapE subfamily. In terms of assembly, homodimer. Zn(2+) is required as a cofactor. Co(2+) serves as cofactor.

It carries out the reaction N-succinyl-(2S,6S)-2,6-diaminopimelate + H2O = (2S,6S)-2,6-diaminopimelate + succinate. The protein operates within amino-acid biosynthesis; L-lysine biosynthesis via DAP pathway; LL-2,6-diaminopimelate from (S)-tetrahydrodipicolinate (succinylase route): step 3/3. In terms of biological role, catalyzes the hydrolysis of N-succinyl-L,L-diaminopimelic acid (SDAP), forming succinate and LL-2,6-diaminopimelate (DAP), an intermediate involved in the bacterial biosynthesis of lysine and meso-diaminopimelic acid, an essential component of bacterial cell walls. The sequence is that of Succinyl-diaminopimelate desuccinylase from Nautilia profundicola (strain ATCC BAA-1463 / DSM 18972 / AmH).